We begin with the raw amino-acid sequence, 1062 residues long: Carbamoyl phosphate synthase large chain (1062 aa).

The tract at residues Met-1–Glu-401 is carboxyphosphate synthetic domain. ATP contacts are provided by Arg-129, Arg-169, Gly-175, Gly-176, Lys-208, Ile-210, Glu-215, Gly-241, Ile-242, His-243, Gln-284, and Glu-298. The 195-residue stretch at Lys-133–Val-327 folds into the ATP-grasp 1 domain. Residues Gln-284, Glu-298, and Asn-300 each contribute to the Mg(2+) site. Mn(2+) is bound by residues Gln-284, Glu-298, and Asn-300. The interval Ile-402–Ser-546 is oligomerization domain. Residues His-547–Lys-929 are carbamoyl phosphate synthetic domain. Positions Asp-671–Met-861 constitute an ATP-grasp 2 domain. Residues Arg-707, Asp-746, Leu-748, Glu-752, Gly-777, Val-778, His-779, Ser-780, Gln-820, and Glu-832 each contribute to the ATP site. Mg(2+)-binding residues include Gln-820, Glu-832, and Asn-834. Gln-820, Glu-832, and Asn-834 together coordinate Mn(2+). One can recognise an MGS-like domain in the interval Met-930–Gln-1062. An allosteric domain region spans residues Met-930–Gln-1062.

Belongs to the CarB family. Composed of two chains; the small (or glutamine) chain promotes the hydrolysis of glutamine to ammonia, which is used by the large (or ammonia) chain to synthesize carbamoyl phosphate. Tetramer of heterodimers (alpha,beta)4. It depends on Mg(2+) as a cofactor. The cofactor is Mn(2+).

It carries out the reaction hydrogencarbonate + L-glutamine + 2 ATP + H2O = carbamoyl phosphate + L-glutamate + 2 ADP + phosphate + 2 H(+). The catalysed reaction is hydrogencarbonate + NH4(+) + 2 ATP = carbamoyl phosphate + 2 ADP + phosphate + 2 H(+). It functions in the pathway amino-acid biosynthesis; L-arginine biosynthesis; carbamoyl phosphate from bicarbonate: step 1/1. The protein operates within pyrimidine metabolism; UMP biosynthesis via de novo pathway; (S)-dihydroorotate from bicarbonate: step 1/3. In terms of biological role, large subunit of the glutamine-dependent carbamoyl phosphate synthetase (CPSase). CPSase catalyzes the formation of carbamoyl phosphate from the ammonia moiety of glutamine, carbonate, and phosphate donated by ATP, constituting the first step of 2 biosynthetic pathways, one leading to arginine and/or urea and the other to pyrimidine nucleotides. The large subunit (synthetase) binds the substrates ammonia (free or transferred from glutamine from the small subunit), hydrogencarbonate and ATP and carries out an ATP-coupled ligase reaction, activating hydrogencarbonate by forming carboxy phosphate which reacts with ammonia to form carbamoyl phosphate. The polypeptide is Carbamoyl phosphate synthase large chain (Lactobacillus acidophilus (strain ATCC 700396 / NCK56 / N2 / NCFM)).